The following is a 420-amino-acid chain: Histidine--tRNA ligase (420 aa).

Belongs to the class-II aminoacyl-tRNA synthetase family. Homodimer.

It is found in the cytoplasm. It carries out the reaction tRNA(His) + L-histidine + ATP = L-histidyl-tRNA(His) + AMP + diphosphate + H(+). This chain is Histidine--tRNA ligase (hisS), found in Mycoplasmopsis pulmonis (strain UAB CTIP) (Mycoplasma pulmonis).